The following is a 61-amino-acid chain: Sperm protamine P1 (61 aa).

Residues 1-61 (MARYRHSRSR…RYSRRRRRRY (61 aa)) form a disordered region.

This sequence belongs to the protamine P1 family. As to expression, testis.

The protein resides in the nucleus. The protein localises to the chromosome. Its function is as follows. Protamines substitute for histones in the chromatin of sperm during the haploid phase of spermatogenesis. They compact sperm DNA into a highly condensed, stable and inactive complex. This is Sperm protamine P1 (PRM1) from Setonix brachyurus (Quokka).